Here is a 455-residue protein sequence, read N- to C-terminus: Glutamyl-tRNA reductase (455 aa).

Substrate contacts are provided by residues 49 to 52 (TCNR), serine 109, 114 to 116 (ETQ), and glutamine 120. Cysteine 50 functions as the Nucleophile in the catalytic mechanism. 189–194 (GAGKMG) provides a ligand contact to NADP(+).

It belongs to the glutamyl-tRNA reductase family. In terms of assembly, homodimer.

The enzyme catalyses (S)-4-amino-5-oxopentanoate + tRNA(Glu) + NADP(+) = L-glutamyl-tRNA(Glu) + NADPH + H(+). The protein operates within porphyrin-containing compound metabolism; protoporphyrin-IX biosynthesis; 5-aminolevulinate from L-glutamyl-tRNA(Glu): step 1/2. Its function is as follows. Catalyzes the NADPH-dependent reduction of glutamyl-tRNA(Glu) to glutamate 1-semialdehyde (GSA). This is Glutamyl-tRNA reductase from Geobacillus thermodenitrificans (strain NG80-2).